The chain runs to 693 residues: F-box protein MAX2 (693 aa).

Residues 3 to 50 (STTLSDLPDVILSTISSLVSDSRARNSLSLVSHKFLALERSTRSHLTI) form the F-box domain. 14 LRR repeats span residues 9–34 (LPDV…SLVS), 49–74 (TIRG…DLSF), 75–100 (LSPW…RLKF), 110–135 (VYTR…KLLR), 141–167 (SQIP…DLSN), 168–196 (FYHW…DLLT), 200–225 (TEGY…RVAC), 232–257 (FEFV…HMVD), 274–299 (DSAV…VLDV), 302–327 (DVKH…KLGQ), 332–356 (CSAT…SIKN), 357–382 (SGDL…EIQG), 383–409 (CENV…RISC), and 410–436 (CKNL…HIDC). The tract at residues 445–465 (EVEGRVETSEADHEEEDDGYE) is disordered. 4 LRR repeats span residues 480-505 (CSTS…SLWI), 508-532 (GEFL…RIKI), 541-565 (RPAE…QLDC), and 608-637 (DRDV…FIHG).

In terms of assembly, part of a SCF (SKP1-cullin-F-box) protein ligase complex. Interacts with SKP1A/ASK1. Interacts with CUL1. Interacts with SMXL6, SMXL7 and SMXL8. Interacts with D14. Forms a complex with D14 and SKP1A/ASK1 in presence of strigolactone. In terms of tissue distribution, expressed in the vasculature of growing leaves and roots, rosette axillary bud, flowers, siliques, funiculi and stems.

The protein localises to the nucleus. The protein operates within protein modification; protein ubiquitination. Its function is as follows. Component of SCF(ASK-cullin-F-box) E3 ubiquitin ligase complexes, which may mediate the ubiquitination and subsequent proteasomal degradation of target proteins. Promotes the senescence. Is necessary for responses to strigolactones and karrikins. Contributes to the selective repression of axillary shoots and moderates the branching by regulating negatively the auxin transport in primary stems, in an AXR1-independent manner. Required for the progression of leaf senescence mediated by methyl jasmonate. Required at each node to suppress axillary bud growth. The polypeptide is F-box protein MAX2 (Arabidopsis thaliana (Mouse-ear cress)).